Reading from the N-terminus, the 3546-residue chain is Ubiquitin carboxyl-terminal hydrolase 34 (3546 aa).

Residues Ser-352, Ser-486, Ser-487, and Ser-490 each carry the phosphoserine modification. Disordered regions lie at residues 502-535, 550-679, and 1459-1478; these read KEEEELRRTAPSPWSPAASPQSSDNSDTHQSGGS, VQQR…VFNT, and TGSYSDLYPDSDDSSEDQVE. The segment covering 511-524 has biased composition (low complexity); that stretch reads APSPWSPAASPQSS. Polar residues-rich tracts occupy residues 525 to 534 and 560 to 570; these read DNSDTHQSGG and SMQGSSDETAN. Positions 571–590 are enriched in low complexity; the sequence is SGEDGSSGPGSSSGHSDGSS. The segment covering 591-609 has biased composition (polar residues); that stretch reads NEVNSSHASQSAGSPGSEV. The span at 610 to 627 shows a compositional bias: acidic residues; it reads QSEDIADIEALKEEDEDD. Ser-649 is subject to Phosphoserine. Residues 659 to 671 are compositionally biased toward polar residues; the sequence is QGMSERNGTSSGT. Acidic residues predominate over residues 1467 to 1477; sequence PDSDDSSEDQV. Ser-1469 is modified (phosphoserine). The 346-residue stretch at 1894–2239 folds into the USP domain; that stretch reads VGLTNLGATC…SAYMLFYKRM (346 aa). Cys-1903 acts as the Nucleophile in catalysis. The Proton acceptor role is filled by His-2164. Phosphoserine is present on Ser-2488. The disordered stretch occupies residues 3331-3443; that stretch reads NSLQEQEAKE…HAEEQSNNGR (113 aa). A compositionally biased stretch (basic and acidic residues) spans 3336 to 3347; that stretch reads QEAKERKTKDDE. 2 positions are modified to phosphoserine: Ser-3358 and Ser-3359. Phosphothreonine is present on Thr-3381. Phosphoserine occurs at positions 3386 and 3406. Over residues 3421 to 3432 the composition is skewed to polar residues; that stretch reads SSFSEDMSNIRS. The segment covering 3433 to 3443 has biased composition (basic and acidic residues); it reads QHAEEQSNNGR. Residue Ser-3503 is modified to Phosphoserine.

The protein belongs to the peptidase C19 family. As to quaternary structure, interacts with AXIN1 and AXIN2. As to expression, expressed in brain at low level.

It carries out the reaction Thiol-dependent hydrolysis of ester, thioester, amide, peptide and isopeptide bonds formed by the C-terminal Gly of ubiquitin (a 76-residue protein attached to proteins as an intracellular targeting signal).. Its function is as follows. Ubiquitin hydrolase that can remove conjugated ubiquitin from AXIN1 and AXIN2, thereby acting as a regulator of Wnt signaling pathway. Acts as an activator of the Wnt signaling pathway downstream of the beta-catenin destruction complex by deubiquitinating and stabilizing AXIN1 and AXIN2, leading to promote nuclear accumulation of AXIN1 and AXIN2 and positively regulate beta-catenin (CTNBB1)-mediated transcription. Recognizes and hydrolyzes the peptide bond at the C-terminal Gly of ubiquitin. Involved in the processing of poly-ubiquitin precursors as well as that of ubiquitinated proteins. The chain is Ubiquitin carboxyl-terminal hydrolase 34 (USP34) from Homo sapiens (Human).